The sequence spans 54 residues: Ribulose bisphosphate carboxylase large chain (54 aa).

A propeptide spanning residues 1-2 (MS) is cleaved from the precursor. P3 carries the N-acetylproline modification. N6,N6,N6-trimethyllysine is present on K14.

The protein belongs to the RuBisCO large chain family. Type I subfamily. In terms of assembly, heterohexadecamer of 8 large chains and 8 small chains.

It is found in the plastid. It localises to the chloroplast. It carries out the reaction 2 (2R)-3-phosphoglycerate + 2 H(+) = D-ribulose 1,5-bisphosphate + CO2 + H2O. The enzyme catalyses D-ribulose 1,5-bisphosphate + O2 = 2-phosphoglycolate + (2R)-3-phosphoglycerate + 2 H(+). RuBisCO catalyzes two reactions: the carboxylation of D-ribulose 1,5-bisphosphate, the primary event in carbon dioxide fixation, as well as the oxidative fragmentation of the pentose substrate in the photorespiration process. Both reactions occur simultaneously and in competition at the same active site. In Icacina mannii, this protein is Ribulose bisphosphate carboxylase large chain (rbcL).